The sequence spans 812 residues: Lon protease (812 aa).

The region spanning 11–204 (IPVLPLRDVV…YLMAMMESEI (194 aa)) is the Lon N-terminal domain. 356–363 (GPPGVGKT) contacts ATP. Positions 592–773 (ENRVGQVTGL…EEEQTLSLQN (182 aa)) constitute a Lon proteolytic domain. Catalysis depends on residues S679 and K722. Residues 745–764 (KENPDNAKADQDRHPVKNNE) are compositionally biased toward basic and acidic residues. The interval 745-766 (KENPDNAKADQDRHPVKNNEEE) is disordered.

This sequence belongs to the peptidase S16 family. Homohexamer. Organized in a ring with a central cavity. ATP binding and hydrolysis do not affect the oligomeric state of the enzyme.

Its subcellular location is the cytoplasm. The enzyme catalyses Hydrolysis of proteins in presence of ATP.. Contains an allosteric site (distinct from its active site), whose occupancy by an unfolded polypeptide leads to enzyme activation. ATP-dependent serine protease that mediates the selective degradation of mutant and abnormal proteins as well as certain short-lived regulatory proteins. Required for cellular homeostasis and for survival from DNA damage and developmental changes induced by stress. Degrades polypeptides processively to yield small peptide fragments that are 5 to 10 amino acids long. Binds to DNA in a double-stranded, site-specific manner. Endogenous substrates include the regulatory proteins RcsA and SulA, the transcriptional activator SoxS, and UmuD. Its overproduction specifically inhibits translation through at least two different pathways, one of them being the YoeB-YefM toxin-antitoxin system. The polypeptide is Lon protease (Shigella dysenteriae serotype 1 (strain Sd197)).